The following is a 513-amino-acid chain: Abl interactor 2 (513 aa).

Ser-40 carries the post-translational modification Phosphoserine. A t-SNARE coiled-coil homology domain is found at 45–107 (RALEETKAYT…DIHKEKVARR (63 aa)). A disordered region spans residues 167–431 (KMGGLPRTTP…PPEDYEEEEA (265 aa)). Residues 174 to 185 (TTPPTQKPPSPP) show a composition bias toward pro residues. 2 positions are modified to phosphoserine: Ser-183 and Ser-227. Residues 217–241 (PTRNMAPSQQSPVRTASVNQRNRTY) show a composition bias toward polar residues. The span at 242 to 272 (SSSGSSGGSHPSSRSSSRENSGSGSVGVPIA) shows a compositional bias: low complexity. A compositionally biased stretch (pro residues) spans 273–282 (VPTPSPPSVF). A compositionally biased stretch (low complexity) spans 283–325 (PAPAGSAGTPPLPATSASAPAPLVPATVPSSTAPNAAAGGAPN). Thr-361 is modified (phosphothreonine). Ser-368 is subject to Phosphoserine. The span at 376-399 (SITSQTSLQNQMNGGPFYSQNPVS) shows a compositional bias: polar residues. Over residues 400–409 (DTPPPPPPVE) the composition is skewed to pro residues. The SH3 domain maps to 451–510 (SYLEKVVAIYDYTKDKEDELSFQEGAIIYVIKKNDDGWYEGVMNGVTGLFPGNYVESIMH).

This sequence belongs to the ABI family. As to quaternary structure, component of the WAVE complex composed of ABI2, CYFIP1 or CYFIP2, BRK1, NCKAP1 and WASF1/WAVE1. Within the complex, a heterodimer containing NCKAP1 and CYFIP1 interacts with a heterotrimer formed by WAVE1, ABI2 and BRK1. CYFIP2 binds to activated RAC1 which causes the complex to dissociate, releasing activated WASF1. Interacts (via SH3 domain) with ABL1 and ABL2. In terms of assembly, (Microbial infection) Interacts with human cytomegalovirus UL135. Phosphorylated by ABL1. Widely expressed. Abundant in testes, ovary, thymus, and colon, with lower but detectable levels in prostate, peripheral blood leukocytes, and spleen.

It localises to the cytoplasm. Its subcellular location is the nucleus. The protein localises to the cell projection. It is found in the lamellipodium. The protein resides in the filopodium. It localises to the cytoskeleton. Its subcellular location is the cell junction. The protein localises to the adherens junction. Regulator of actin cytoskeleton dynamics underlying cell motility and adhesion. Functions as a component of the WAVE complex, which activates actin nucleating machinery Arp2/3 to drive lamellipodia formation. Acts as a regulator and substrate of nonreceptor tyrosine kinases ABL1 and ABL2 involved in processes linked to cell growth and differentiation. Positively regulates ABL1-mediated phosphorylation of ENAH, which is required for proper polymerization of nucleated actin filaments at the leading edge. Contributes to the regulation of actin assembly at the tips of neuron projections. In particular, controls dendritic spine morphogenesis and may promote dendritic spine specification toward large mushroom-type spines known as repositories of memory in the brain. In hippocampal neurons, may mediate actin-dependent BDNF-NTRK2 early endocytic trafficking that triggers dendrite outgrowth. Participates in ocular lens morphogenesis, likely by regulating lamellipodia-driven adherens junction formation at the epithelial cell-secondary lens fiber interface. Also required for nascent adherens junction assembly in epithelial cells. This Homo sapiens (Human) protein is Abl interactor 2.